The primary structure comprises 241 residues: MSRIQQVNKSILIRSFCTGAPSKSNFSPVGNFLRIGDVVPDFSQDSSVGQINLYKTLGDSWGLFVSHPKDFTPICTTELGRLAKLKPEFEKRNCKILALSVDSVKDHLEWMKDIEETQKVKINYPIIADQDRKVADLYGMIHPNADNTFTVRSVFFISPDKRLRAQITLPASTGRNFNEIIRILDSFQLTDKYKVATPADWVDGDDCIIVPTVFDEDAKKLFPKGFPKIKSYLRVTPQPNK.

The Thioredoxin domain maps to 33-189 (LRIGDVVPDF…IIRILDSFQL (157 aa)). Catalysis depends on cysteine 75, which acts as the Cysteine sulfenic acid (-SOH) intermediate.

Belongs to the peroxiredoxin family. Prx6 subfamily. Homodimer.

It catalyses the reaction a hydroperoxide + [thioredoxin]-dithiol = an alcohol + [thioredoxin]-disulfide + H2O. Thiol-specific peroxidase that catalyzes the reduction of hydrogen peroxide and organic hydroperoxides to water and alcohols, respectively. Plays a role in cell protection against oxidative stress by detoxifying peroxides. The sequence is that of 1-Cys peroxiredoxin from Dictyostelium discoideum (Social amoeba).